We begin with the raw amino-acid sequence, 26 residues long: Phospholipase A2 homolog A1 (26 aa).

Post-translationally, contains 7 disulfide bonds. Expressed by the venom gland.

The protein resides in the secreted. The polypeptide is Phospholipase A2 homolog A1 (Micrurus pyrrhocryptus (Coral snake)).